Reading from the N-terminus, the 408-residue chain is Neutral cholesterol ester hydrolase 1 (408 aa).

Topologically, residues Met-1–Ser-4 are cytoplasmic. Residues Cys-5–Gly-25 form a helical; Signal-anchor for type II membrane protein membrane-spanning segment. Residues Ser-26 to Leu-408 lie on the Lumenal side of the membrane. Positions His-113–Gly-115 match the Involved in the stabilization of the negatively charged intermediate by the formation of the oxyanion hole motif. The active site involves Ser-191. N-linked (GlcNAc...) asparagine glycosylation is found at Asn-270 and Asn-287. Residues Asp-348 and His-378 contribute to the active site. The N-linked (GlcNAc...) asparagine glycan is linked to Asn-389.

This sequence belongs to the 'GDXG' lipolytic enzyme family. N-glycosylated.

The protein localises to the cell membrane. It is found in the microsome. The catalysed reaction is a 1-O-alkyl-2-acetyl-sn-glycerol + H2O = a 1-O-alkyl-sn-glycerol + acetate + H(+). It carries out the reaction 1-O-hexadecyl-2-acetyl-sn-glycerol + H2O = 1-O-hexadecyl-sn-glycerol + acetate + H(+). It catalyses the reaction a cholesterol ester + H2O = cholesterol + a fatty acid + H(+). The enzyme catalyses cholesteryl (9Z-octadecenoate) + H2O = cholesterol + (9Z)-octadecenoate + H(+). In terms of biological role, hydrolyzes 2-acetyl monoalkylglycerol ether (1-O-alkyl-2-acetyl-sn-glycerol), the penultimate precursor of the pathway for de novo synthesis of platelet-activating factor. May be responsible for the hydrolysis of cholesterol esters (such as cholesteryl (9Z-octadecenoate)) in macrophages. Also involved in organ detoxification by hydrolyzing exogenous organophosphorus compounds. In Pongo abelii (Sumatran orangutan), this protein is Neutral cholesterol ester hydrolase 1 (NCEH1).